The chain runs to 179 residues: Gene 49 protein (179 aa).

2 disordered regions span residues 1 to 38 (MKGN…VTTA) and 102 to 137 (HYAG…GEKR). Residues 18–28 (QPEPAPAPEPE) show a composition bias toward pro residues. A compositionally biased stretch (low complexity) spans 29-38 (TAPSATVTTA). Over residues 104-119 (AGSGGSAPANGGGGGQ) the composition is skewed to gly residues. Residues 120-132 (QQSRAPQAAQEAP) show a composition bias toward low complexity.

This is Gene 49 protein (49) from Mycobacterium (Mycobacteriophage L5).